The primary structure comprises 187 residues: UPF0301 protein YPTS_3341 (187 aa).

Belongs to the UPF0301 (AlgH) family.

In Yersinia pseudotuberculosis serotype IB (strain PB1/+), this protein is UPF0301 protein YPTS_3341.